Consider the following 559-residue polypeptide: DNA ligase (559 aa).

Glu248 provides a ligand contact to ATP. The N6-AMP-lysine intermediate role is filled by Lys250. Residues Arg255, Arg270, Glu300, Phe341, Arg417, and Lys423 each contribute to the ATP site.

It belongs to the ATP-dependent DNA ligase family. Mg(2+) is required as a cofactor.

It catalyses the reaction ATP + (deoxyribonucleotide)n-3'-hydroxyl + 5'-phospho-(deoxyribonucleotide)m = (deoxyribonucleotide)n+m + AMP + diphosphate.. In terms of biological role, DNA ligase that seals nicks in double-stranded DNA during DNA replication, DNA recombination and DNA repair. In Methanopyrus kandleri (strain AV19 / DSM 6324 / JCM 9639 / NBRC 100938), this protein is DNA ligase.